Reading from the N-terminus, the 120-residue chain is Large ribosomal subunit protein uL18 (120 aa).

The protein belongs to the universal ribosomal protein uL18 family. Part of the 50S ribosomal subunit; part of the 5S rRNA/L5/L18/L25 subcomplex. Contacts the 5S and 23S rRNAs.

In terms of biological role, this is one of the proteins that bind and probably mediate the attachment of the 5S RNA into the large ribosomal subunit, where it forms part of the central protuberance. The sequence is that of Large ribosomal subunit protein uL18 from Halalkalibacterium halodurans (strain ATCC BAA-125 / DSM 18197 / FERM 7344 / JCM 9153 / C-125) (Bacillus halodurans).